The primary structure comprises 279 residues: Tetra-spanning protein 1 (279 aa).

Helical transmembrane passes span 25 to 45 (VWFS…LQAI) and 50 to 70 (APPF…AIVL). Asparagine 77 carries an N-linked (GlcNAc...) asparagine glycan. Residues 100-122 (YFILALSMLIDRPILFSLAPYAI) form a helical membrane-spanning segment. Asparagine 143 carries N-linked (GlcNAc...) asparagine glycosylation. Residues 172–192 (MQLVASLETFLLFRLFFGVFL) form a helical membrane-spanning segment. Residues 260–279 (VGTAQSRPTASSSTTAPSST) form a disordered region. A compositionally biased stretch (low complexity) spans 262–279 (TAQSRPTASSSTTAPSST).

This sequence belongs to the PER33/POM33 family. In terms of assembly, interacts with RTN1 and YOP1.

The protein localises to the golgi apparatus membrane. It is found in the endoplasmic reticulum membrane. It localises to the nucleus membrane. In terms of biological role, required for the correct positioning of the cellular division plane by delimiting the actomyosin ring assembly at the cell equator. This Schizosaccharomyces pombe (strain 972 / ATCC 24843) (Fission yeast) protein is Tetra-spanning protein 1 (tts1).